Consider the following 990-residue polypeptide: Protein argonaute 7 (990 aa).

A compositionally biased stretch (basic residues) spans 1–13 (MEEKTHHHHHSTN). Residues 1–25 (MEEKTHHHHHSTNKHIPSSKSRTPL) form a disordered region. Residues 379-484 (EFLTDLPRNK…LPMELCMICE (106 aa)) enclose the PAZ domain. The Piwi domain maps to 649–950 (LIICVMEKKH…AAYRGRLYIE (302 aa)). Residues 953–973 (SESNGGSMNPSSVSRVGPPKT) are disordered. Residues 954–966 (ESNGGSMNPSSVS) are compositionally biased toward polar residues.

Belongs to the argonaute family. Ago subfamily. As to expression, expressed in leaves and floral buds, and at low levels in roots.

In terms of biological role, involved in RNA-mediated post-transcriptional gene silencing (PTGS). Main component of the RNA-induced silencing complex (RISC) that binds to a short guide RNA such as a microRNA (miRNA) or small interfering RNA (siRNA). RISC uses the mature miRNA or siRNA as a guide for slicer-directed cleavage of homologous mRNAs to repress gene expression. Required for the processing of 21 nucleotide trans-acting siRNAs (ta-siRNAs) derived from TAS3a transcripts. Associates preferentially with the microRNA (miRNA) miR390 which guides the cleavage of TAS3 precursor RNA. Seems to act as miR390 specific slicer. Associates mainly with small RNAs of 21 nucleotide in length and with a 5' terminal adenosine. Acts in the RDR6/SGS3/DCL4/AGO7 trans-acting siRNA pathway involved in leaf developmental timing. Does not seem to act on leaf polarity. Required for the production of the 30-40nt bacterial-induced long siRNAs (lsiRNA). Involved in antiviral RNA silencing by contributing to efficient viral RNAs clearance. Targets less structured viral RNAs than AGO1 which is capable of targeting RNAs with more compact structures. The sequence is that of Protein argonaute 7 (AGO7) from Arabidopsis thaliana (Mouse-ear cress).